The following is a 780-amino-acid chain: E3 SUMO-protein ligase gei-17 (780 aa).

Positions 181 to 210 are disordered; it reads APLHSSFPNHGRSSQQSLQKSEKSNRPKKM. Residues 203-367 enclose the PINIT domain; that stretch reads KSNRPKKMYA…AAGVYFVHRV (165 aa). Residues 400 to 485 form an SP-RING-type zinc finger; sequence GEDDIAMDRL…LAKVDKNTTE (86 aa). Positions 431, 433, 454, and 457 each coordinate Zn(2+). The span at 519 to 530 shows a compositional bias: polar residues; the sequence is GTASCSSTNGNG. Disordered regions lie at residues 519 to 544, 560 to 594, and 732 to 755; these read GTAS…ADDD, IMNS…KTKD, and QQHH…SFYA. Residues 732 to 749 show a composition bias toward low complexity; sequence QQHHLQQQQQQQQSPQIM.

Belongs to the PIAS family. As to quaternary structure, may interact with gex-3.

It functions in the pathway protein modification; protein sumoylation. Functions as an E3-type smo-1 ligase. Mediates smo-1 conjugation to air-2 in vitro and is required for proper chromosome alignment. In the early embryo, specifically suppresses checkpoint activation in response to DNA damage, maybe by promoting mus-101 sumoylation. In embryos, plays a role in determining telomere localization in the nucleus. Acts with pie-1 to promote piRNA-mediated silencing and fertility in the adult germline. The chain is E3 SUMO-protein ligase gei-17 from Caenorhabditis elegans.